The sequence spans 1297 residues: Protein Atossa (1297 aa).

Disordered regions lie at residues 1 to 22 (MIPT…GASA) and 117 to 149 (TNPY…THQR). The segment covering 133–144 (GSGSTGSPSSSS) has biased composition (low complexity). Residues 174 to 182 (VSLAINDLN) are transactivation domain 1 (TAD1). Disordered stretches follow at residues 206-227 (SSAG…NSSD), 287-311 (TPTT…KHGP), 518-655 (GLPH…ETQS), 704-741 (SNGT…SSAD), and 1017-1048 (AAHK…DLES). 2 stretches are compositionally biased toward low complexity: residues 213–226 (NNSS…SNSS) and 287–305 (TPTT…SSAS). Residues 564 to 578 (SALTPTTTAGGSNCD) show a composition bias toward polar residues. Residues 605 to 620 (QKYRKRMQRRDKKRER) show a composition bias toward basic residues. Composition is skewed to low complexity over residues 643 to 655 (SQTQ…ETQS) and 706 to 716 (GTANGSTNGAT). The span at 717–731 (DDGDDSDTTASEMEE) shows a compositional bias: acidic residues. A required for macropage invasion region spans residues 1074 to 1132 (LLGNLEESLLQRRLMPKIEVMGFTLQLGASGGFCPTQVNIPAVSYFYELHGETLSTPYL). A transactivation domain 2 (TAD2) region spans residues 1150–1158 (VQATLLNPI). Positions 1192–1213 (SQDQDEGHKVPRSPTVTSTTSK) are disordered. A compositionally biased stretch (low complexity) spans 1203–1212 (RSPTVTSTTS).

This sequence belongs to the ATOS family. In terms of tissue distribution, expressed in macrophages.

Its subcellular location is the nucleus. Functionally, transcription regulator that synchronizes transcriptional and translational programs to promote macrophage invasion of tissues. Required in macrophages for their early invasion into the extended germband. Induces transcriptional expression of metabolic enzymes as well as of the translational regulator pths/DDX47. With pths/DDX47, adjusts transcription and translation of a subset of OXPHOS genes to increase mitochondrial bioenergetics and allow macrophage tissue invasion. The sequence is that of Protein Atossa from Drosophila melanogaster (Fruit fly).